A 443-amino-acid chain; its full sequence is UDP-N-acetylmuramate--L-alanine ligase (443 aa).

An ATP-binding site is contributed by 110–116; sequence GAHGKTS.

It belongs to the MurCDEF family.

Its subcellular location is the cytoplasm. The enzyme catalyses UDP-N-acetyl-alpha-D-muramate + L-alanine + ATP = UDP-N-acetyl-alpha-D-muramoyl-L-alanine + ADP + phosphate + H(+). It functions in the pathway cell wall biogenesis; peptidoglycan biosynthesis. In terms of biological role, cell wall formation. This Streptococcus equi subsp. zooepidemicus (strain MGCS10565) protein is UDP-N-acetylmuramate--L-alanine ligase.